A 211-amino-acid chain; its full sequence is MKPNFDPTLYLVTDRGCLAGRDLLDVVGRAVAGGAKLVQLREKNACTREFVELARALVGLVRPLGARLVINDRVDVALACDADGVHVGQDDMRPADVRALIGPDRLLGLSVTGEDEARAARGEPVDYLGAGPVFATATKKDAGAPQGIEGLIRMIALAEVPVVAIGAVTAANAAAVMAAGAAGLAMVSAICAAPDPEAAARELRVIAEQGR.

4-amino-2-methyl-5-(diphosphooxymethyl)pyrimidine is bound by residues 39 to 43 and asparagine 71; that span reads QLREK. 2 residues coordinate Mg(2+): aspartate 72 and aspartate 91. Serine 110 is a 4-amino-2-methyl-5-(diphosphooxymethyl)pyrimidine binding site. 136-138 lines the 2-[(2R,5Z)-2-carboxy-4-methylthiazol-5(2H)-ylidene]ethyl phosphate pocket; the sequence is TAT. Lysine 139 is a binding site for 4-amino-2-methyl-5-(diphosphooxymethyl)pyrimidine. Residues alanine 167 and 187–188 each bind 2-[(2R,5Z)-2-carboxy-4-methylthiazol-5(2H)-ylidene]ethyl phosphate; that span reads VS.

It belongs to the thiamine-phosphate synthase family. It depends on Mg(2+) as a cofactor.

It carries out the reaction 2-[(2R,5Z)-2-carboxy-4-methylthiazol-5(2H)-ylidene]ethyl phosphate + 4-amino-2-methyl-5-(diphosphooxymethyl)pyrimidine + 2 H(+) = thiamine phosphate + CO2 + diphosphate. It catalyses the reaction 2-(2-carboxy-4-methylthiazol-5-yl)ethyl phosphate + 4-amino-2-methyl-5-(diphosphooxymethyl)pyrimidine + 2 H(+) = thiamine phosphate + CO2 + diphosphate. The catalysed reaction is 4-methyl-5-(2-phosphooxyethyl)-thiazole + 4-amino-2-methyl-5-(diphosphooxymethyl)pyrimidine + H(+) = thiamine phosphate + diphosphate. The protein operates within cofactor biosynthesis; thiamine diphosphate biosynthesis; thiamine phosphate from 4-amino-2-methyl-5-diphosphomethylpyrimidine and 4-methyl-5-(2-phosphoethyl)-thiazole: step 1/1. In terms of biological role, condenses 4-methyl-5-(beta-hydroxyethyl)thiazole monophosphate (THZ-P) and 2-methyl-4-amino-5-hydroxymethyl pyrimidine pyrophosphate (HMP-PP) to form thiamine monophosphate (TMP). This chain is Thiamine-phosphate synthase, found in Solidesulfovibrio magneticus (strain ATCC 700980 / DSM 13731 / RS-1) (Desulfovibrio magneticus).